Reading from the N-terminus, the 1121-residue chain is tRNA (34-2'-O)-methyltransferase regulator WDR6 (1121 aa).

An N-acetylmethionine modification is found at methionine 1. WD repeat units lie at residues 53–97 (IKRV…VVKI), 105–143 (WELW…LYDP), 147–189 (CILQ…VWYP), 200–238 (APDR…IWKV), 247–285 (RVQN…VWSH), 289–327 (ILQA…LWHL), 335–376 (LGVS…LYDV), 381–422 (WEQL…VVPI), 425–470 (PTAA…ISAA), 476–520 (IFVK…LFPS), 559–598 (PVST…FVRD), 604–642 (VLRQ…VWNP), 645–684 (HEKL…LYRA), 739–785 (LTDI…VWGI), 848–893 (RNRH…LFLL), 901–946 (QLLA…FWDL), 970–1012 (GTPS…VFVL), 1036–1073 (EEYS…FWRL), and 1079–1121 (TFMN…NWYD).

Belongs to the WD repeat WDR6 family. In terms of assembly, interacts with FTSJ1; the interaction is direct, and required for 2'-O-methylation of position 34 in substrate tRNAs. Interacts with IRS4. Interacts with STK11/LKB1. As to expression, ubiquitous.

The protein localises to the cytoplasm. In terms of biological role, together with methyltransferase FTSJ1, methylates the 2'-O-ribose of nucleotides at position 34 of the tRNA anticodon loop of substrate tRNAs. Required for the correct positioning of the substrate tRNA for methylation. Required to suppress amino acid starvation-induced autophagy. Enhances the STK11/LKB1-induced cell growth suppression activity. The sequence is that of tRNA (34-2'-O)-methyltransferase regulator WDR6 (WDR6) from Homo sapiens (Human).